Reading from the N-terminus, the 195-residue chain is dITP/XTP pyrophosphatase (195 aa).

8-13 (TNNQGK) contributes to the substrate binding site. Mg(2+)-binding residues include glutamate 39 and aspartate 68. Residue aspartate 68 is the Proton acceptor of the active site. Substrate is bound by residues serine 69, 149–152 (FGYD), lysine 172, and 177–178 (HR).

Belongs to the HAM1 NTPase family. As to quaternary structure, homodimer. It depends on Mg(2+) as a cofactor.

The enzyme catalyses XTP + H2O = XMP + diphosphate + H(+). The catalysed reaction is dITP + H2O = dIMP + diphosphate + H(+). It carries out the reaction ITP + H2O = IMP + diphosphate + H(+). Its function is as follows. Pyrophosphatase that catalyzes the hydrolysis of nucleoside triphosphates to their monophosphate derivatives, with a high preference for the non-canonical purine nucleotides XTP (xanthosine triphosphate), dITP (deoxyinosine triphosphate) and ITP. Seems to function as a house-cleaning enzyme that removes non-canonical purine nucleotides from the nucleotide pool, thus preventing their incorporation into DNA/RNA and avoiding chromosomal lesions. The chain is dITP/XTP pyrophosphatase from Staphylococcus epidermidis (strain ATCC 12228 / FDA PCI 1200).